The following is a 262-amino-acid chain: Hydroxyethylthiazole kinase (262 aa).

Position 50 (Met50) interacts with substrate. Residues Arg125 and Thr171 each contribute to the ATP site. Gly198 lines the substrate pocket.

Belongs to the Thz kinase family. Mg(2+) is required as a cofactor.

The catalysed reaction is 5-(2-hydroxyethyl)-4-methylthiazole + ATP = 4-methyl-5-(2-phosphooxyethyl)-thiazole + ADP + H(+). The protein operates within cofactor biosynthesis; thiamine diphosphate biosynthesis; 4-methyl-5-(2-phosphoethyl)-thiazole from 5-(2-hydroxyethyl)-4-methylthiazole: step 1/1. Catalyzes the phosphorylation of the hydroxyl group of 4-methyl-5-beta-hydroxyethylthiazole (THZ). This chain is Hydroxyethylthiazole kinase, found in Escherichia coli (strain SMS-3-5 / SECEC).